The following is a 415-amino-acid chain: Vascular endothelial growth factor C (415 aa).

The first 31 residues, Met-1–Ala-31, serve as a signal peptide directing secretion. Residues Phe-32 to Ala-107 constitute a propeptide that is removed on maturation. Intrachain disulfides connect Cys-127/Cys-169, Cys-158/Cys-205, and Cys-162/Cys-207. 3 N-linked (GlcNAc...) asparagine glycosylation sites follow: Asn-171, Asn-201, and Asn-236. The propeptide occupies Ser-224–Asn-415. Repeat copies occupy residues Cys-276 to Cys-291, Cys-300 to Cys-315, Cys-324 to Cys-339, and Cys-343 to Cys-358. The 4 X 16 AA repeats of C-X(10)-C-X-C-X(1,3)-C stretch occupies residues Cys-276–Cys-358.

This sequence belongs to the PDGF/VEGF growth factor family. Homodimer; non-covalent and antiparallel. Interacts with FLT4/VEGFR3; the interaction is required for FLT4/VEGFR3 homodimarization and activation. Post-translationally, undergoes a complex proteolytic maturation which generates a variety of processed secreted forms with increased activity toward VEGFR-3, but only the fully processed form could activate VEGFR-2. VEGF-C first form an antiparallel homodimer linked by disulfide bonds. Before secretion, a cleavage occurs between Arg-223 and Ser-224 producing a heterotetramer. The next extracellular step of the processing removes the N-terminal propeptide. Finally the mature VEGF-C is composed mostly of two VEGF homology domains (VHDs) bound by non-covalent interactions. In terms of tissue distribution, expressed in adult heart, brain, spleen, lung, liver, skeletal muscle, kidney, testis and intestine with higher levels in heart, brain and kidney. Isoform 4 levels are very low. Isoform 3 is mostly expressed in liver and has reduced expression level in other tissues. Isoform 2 is mostly expressed in brain and kidney, although a lower level expression in other tissues is also detectable.

The protein localises to the secreted. Functionally, growth factor active in angiogenesis, and endothelial cell growth, stimulating their proliferation and migration and also has effects on the permeability of blood vessels. May function in angiogenesis of the venous and lymphatic vascular systems during embryogenesis, and also in the maintenance of differentiated lymphatic endothelium in adults. Binds and activates KDR/VEGFR2 and FLT4/VEGFR3 receptors. The protein is Vascular endothelial growth factor C (Vegfc) of Mus musculus (Mouse).